The chain runs to 377 residues: Spermidine/putrescine import ATP-binding protein PotA (377 aa).

Positions 22–252 (VRLQNVTKRF…PANRFVADFI (231 aa)) constitute an ABC transporter domain. 54–61 (GPSGCGKT) provides a ligand contact to ATP.

It belongs to the ABC transporter superfamily. Spermidine/putrescine importer (TC 3.A.1.11.1) family. In terms of assembly, the complex is composed of two ATP-binding proteins (PotA), two transmembrane proteins (PotB and PotC) and a solute-binding protein (PotD).

Its subcellular location is the cell membrane. It catalyses the reaction ATP + H2O + polyamine-[polyamine-binding protein]Side 1 = ADP + phosphate + polyamineSide 2 + [polyamine-binding protein]Side 1.. Its function is as follows. Part of the ABC transporter complex PotABCD involved in spermidine/putrescine import. Responsible for energy coupling to the transport system. The polypeptide is Spermidine/putrescine import ATP-binding protein PotA (Rubrobacter xylanophilus (strain DSM 9941 / JCM 11954 / NBRC 16129 / PRD-1)).